Consider the following 655-residue polypeptide: Epithelial sodium channel subunit alpha (655 aa).

The Cytoplasmic segment spans residues 1–55; that stretch reads MTDKEEEAEGGKKKEPMIGFYDSYQELFEFFCNNTTIHGTIRMVCSKHNNMKTVS. The helical transmembrane segment at 56-76 threads the bilayer; that stretch reads WTILFITTFGVMYWQFGLLLG. At 77–531 the chain is on the extracellular side; that stretch reads QYYSYPVSIT…SQWSLWFGSS (455 aa). Cystine bridges form between Cys102/Cys275, Cys199/Cys206, Cys252/Cys259, Cys364/Cys448, Cys385/Cys425, Cys385/Cys444, Cys389/Cys440, Cys398/Cys425, Cys398/Cys448, and Cys400/Cys414. The chain crosses the membrane as a helical span at residues 532 to 552; it reads VLSVVEMGELVFDLIAVGVIV. Residues 553–655 are Cytoplasmic-facing; that stretch reads LRRRRREKCQ…QEASEGPTVL (103 aa). The segment at 561–587 is disordered; it reads CQASSDGEGTSDSTAGTHRGQENASRS. Residues 562-586 show a composition bias toward polar residues; the sequence is QASSDGEGTSDSTAGTHRGQENASR.

It belongs to the amiloride-sensitive sodium channel (TC 1.A.6) family. SCNN1A subfamily. As to quaternary structure, heterotrimer; containing an alpha/SCNN1A, a beta/SCNN1B and a gamma/SCNN1G subunit. As to expression, strongly expressed in gill, kidney and rectum (at protein level). More weakly expressed in muscle, brain, heart, liver and intestine.

It is found in the apical cell membrane. The protein localises to the cell projection. It localises to the cilium. The protein resides in the cytoplasmic granule. Its subcellular location is the cytoplasm. It is found in the cytoplasmic vesicle. The protein localises to the secretory vesicle. It localises to the acrosome. The protein resides in the flagellum. It catalyses the reaction Na(+)(in) = Na(+)(out). Its activity is regulated as follows. Originally identified and characterized by its inhibition by the diuretic drug amiloride. Functionally, this is one of the three pore-forming subunits of the heterotrimeric epithelial sodium channel (ENaC), a critical regulator of sodium balance and fluid homeostasis. ENaC operates in epithelial tissues, where it mediates the electrodiffusion of sodium ions from extracellular fluid through the apical membrane of cells, with water following osmotically. The chain is Epithelial sodium channel subunit alpha (scnn1a) from Neoceratodus forsteri (Australian lungfish).